Consider the following 202-residue polypeptide: Dephospho-CoA kinase (202 aa).

The region spanning 5–202 (IVGLTGGIAS…DADYRARSDR (198 aa)) is the DPCK domain. 13 to 18 (ASGKSA) serves as a coordination point for ATP.

This sequence belongs to the CoaE family.

The protein localises to the cytoplasm. It catalyses the reaction 3'-dephospho-CoA + ATP = ADP + CoA + H(+). Its pathway is cofactor biosynthesis; coenzyme A biosynthesis; CoA from (R)-pantothenate: step 5/5. Its function is as follows. Catalyzes the phosphorylation of the 3'-hydroxyl group of dephosphocoenzyme A to form coenzyme A. This chain is Dephospho-CoA kinase, found in Xanthomonas oryzae pv. oryzae (strain MAFF 311018).